Here is a 657-residue protein sequence, read N- to C-terminus: MRLKIGFILRSLLVVGSFLGLVVLWSSLTPRPDDPSPLSRMREDRDVNDPMPNRGGNGLAPGEDRFKPVVPWPHVEGVEVDLESIRRKNKAKNEQEHHAGGDSQKDIMQRQYLTFKPQTFTYRDPVLRPGILGNFEPKEPEPPGVVGGPGEKAKPLVLGPEFKQAIQASIKEFGFNMVASDMISLDRSVNDLRQEECKYWHYDENLLTSSVVIVFHNEGWSTLMRTVHSVIKRTPRKYLAEIVLIDDFSNKEHLKEKLDEYIKLWNGLVKVFRNERREGLIQARSIGAQKAKLGQVLIYLDAHCEVAVNWYAPLVAPISKDRTICTVPLIDVINGNTYEIIPQGGGDEDGYARGAWDWSMLWKRVPLTPQEKRLRKTKTEPYRSPAMAGGLFAIEREFFFELGLYDPGLQIWGGENFEISYKIWQCGGKLLFVPCSRVGHIYRLEGWQGNPPPIYVGSSPTLKNYVRVVEVWWDEYKDYFYASRPESQALPYGDISELKKFREDHNCKSFKWFMEEIAYDITSHYPLPPKNVDWGEIRGFETAYCIDSMGKTNGGFVELGPCHRMGGNQLFRINEANQLMQYDQCLTKGADGSKVMITHCNLNEFKEWQYFKNLHRFTHIPSGKCLDRSEVLHQVFISNCDSSKTTQKWEMNNIHSV.

Residues methionine 1–glycine 6 lie on the Cytoplasmic side of the membrane. The helical; Signal-anchor for type II membrane protein transmembrane segment at phenylalanine 7–threonine 29 threads the bilayer. The Lumenal portion of the chain corresponds to proline 30–valine 657. Residues arginine 31 to phenylalanine 66 form a disordered region. 5 disulfides stabilise this stretch: cysteine 197-cysteine 435, cysteine 426-cysteine 507, cysteine 545-cysteine 562, cysteine 585-cysteine 600, and cysteine 625-cysteine 640. The tract at residues leucine 206–proline 317 is catalytic subdomain A. Substrate-binding residues include aspartate 247 and arginine 277. 2 residues coordinate Mn(2+): aspartate 301 and histidine 303. Residues proline 381–arginine 443 are catalytic subdomain B. Tryptophan 412 provides a ligand contact to substrate. Histidine 440 contributes to the Mn(2+) binding site. Arginine 443 contributes to the substrate binding site. The 121-residue stretch at valine 532–asparagine 652 folds into the Ricin B-type lectin domain.

It belongs to the glycosyltransferase 2 family. GalNAc-T subfamily. Mn(2+) serves as cofactor.

The protein resides in the golgi apparatus membrane. The catalysed reaction is L-seryl-[protein] + UDP-N-acetyl-alpha-D-galactosamine = a 3-O-[N-acetyl-alpha-D-galactosaminyl]-L-seryl-[protein] + UDP + H(+). The enzyme catalyses L-threonyl-[protein] + UDP-N-acetyl-alpha-D-galactosamine = a 3-O-[N-acetyl-alpha-D-galactosaminyl]-L-threonyl-[protein] + UDP + H(+). It participates in protein modification; protein glycosylation. Glycopeptide transferase involved in O-linked oligosaccharide biosynthesis, which catalyzes the transfer of an N-acetyl-D-galactosamine residue to an already glycosylated peptide. In contrast to other proteins of the family, it does not act as a peptide transferase that transfers GalNAc onto serine or threonine residue on the protein receptor, but instead requires the prior addition of a GalNAc on a peptide before adding additional GalNAc moieties. Some peptide transferase activity is however not excluded, considering that its appropriate peptide substrate may remain unidentified. This Pongo abelii (Sumatran orangutan) protein is N-acetylgalactosaminyltransferase 7 (GALNT7).